Consider the following 476-residue polypeptide: ATP synthase subunit beta, chloroplastic (476 aa).

ATP is bound at residue 155-162; it reads GGAGVGKT.

Belongs to the ATPase alpha/beta chains family. F-type ATPases have 2 components, CF(1) - the catalytic core - and CF(0) - the membrane proton channel. CF(1) has five subunits: alpha(3), beta(3), gamma(1), delta(1), epsilon(1). CF(0) has four main subunits: a(1), b(1), b'(1) and c(9-12).

Its subcellular location is the plastid. It is found in the chloroplast thylakoid membrane. The catalysed reaction is ATP + H2O + 4 H(+)(in) = ADP + phosphate + 5 H(+)(out). Functionally, produces ATP from ADP in the presence of a proton gradient across the membrane. The catalytic sites are hosted primarily by the beta subunits. The polypeptide is ATP synthase subunit beta, chloroplastic (Emiliania huxleyi (Coccolithophore)).